Reading from the N-terminus, the 160-residue chain is Cytochrome b6-f complex subunit 4 (160 aa).

The next 3 helical transmembrane spans lie at 36–56 (LLYM…GLAV), 95–115 (LLGV…PFIE), and 131–151 (TVFL…TLPI).

It belongs to the cytochrome b family. PetD subfamily. As to quaternary structure, the 4 large subunits of the cytochrome b6-f complex are cytochrome b6, subunit IV (17 kDa polypeptide, petD), cytochrome f and the Rieske protein, while the 4 small subunits are petG, petL, petM and petN. The complex functions as a dimer.

The protein localises to the plastid. The protein resides in the chloroplast thylakoid membrane. In terms of biological role, component of the cytochrome b6-f complex, which mediates electron transfer between photosystem II (PSII) and photosystem I (PSI), cyclic electron flow around PSI, and state transitions. This Coleochaete orbicularis (Charophycean green alga) protein is Cytochrome b6-f complex subunit 4.